Reading from the N-terminus, the 509-residue chain is Protein OS-9 homolog (509 aa).

Residues 1-23 form the signal peptide; that stretch reads MRRQSRIVASLLVLACASSGAFA. Polar residues predominate over residues 64–74; the sequence is SPDLNDISEQT. The interval 64–91 is disordered; that stretch reads SPDLNDISEQTPLKDESEESIRDGSSGE. Residues 75–91 are compositionally biased toward basic and acidic residues; it reads PLKDESEESIRDGSSGE. A glycan (N-linked (GlcNAc...) asparagine) is linked at Asn-120. The region spanning 151–291 is the MRH domain; sequence GKCLYYISGW…LIYTPRLCND (141 aa). A disulfide bond links Cys-153 and Cys-166. Residues Trp-160, Trp-161, Gln-173, Asp-246, Arg-252, Glu-273, and Tyr-279 each coordinate a mannooligosaccharide derivative. Intrachain disulfides connect Cys-245–Cys-277 and Cys-260–Cys-289. The disordered stretch occupies residues 433 to 509; sequence GVVDTDEDEE…GSEEIFKDEL (77 aa). A compositionally biased stretch (acidic residues) spans 436-451; that stretch reads DTDEDEEDGYENEEGE. Over residues 452–461 the composition is skewed to basic and acidic residues; it reads TDKREQRENT. Residues 489-502 show a composition bias toward acidic residues; that stretch reads RSEDGEDPDVDGSE. The Prevents secretion from ER motif lies at 506–509; sequence KDEL.

This sequence belongs to the OS-9 family. In terms of assembly, interacts with missfolded ER lumenal proteins.

The protein localises to the endoplasmic reticulum membrane. In terms of biological role, lectin involved in the quality control of the secretory pathway. As a member of the endoplasmic reticulum-associated degradation lumenal (ERAD-L) surveillance system, targets misfolded endoplasmic reticulum lumenal glycoproteins for degradation. In Emericella nidulans (strain FGSC A4 / ATCC 38163 / CBS 112.46 / NRRL 194 / M139) (Aspergillus nidulans), this protein is Protein OS-9 homolog (yos9).